A 300-amino-acid polypeptide reads, in one-letter code: Ribosomal protein L11 methyltransferase (300 aa).

Positions 152, 173, 195, and 234 each coordinate S-adenosyl-L-methionine.

Belongs to the methyltransferase superfamily. PrmA family.

It is found in the cytoplasm. The catalysed reaction is L-lysyl-[protein] + 3 S-adenosyl-L-methionine = N(6),N(6),N(6)-trimethyl-L-lysyl-[protein] + 3 S-adenosyl-L-homocysteine + 3 H(+). In terms of biological role, methylates ribosomal protein L11. This is Ribosomal protein L11 methyltransferase from Paraburkholderia phymatum (strain DSM 17167 / CIP 108236 / LMG 21445 / STM815) (Burkholderia phymatum).